The sequence spans 190 residues: Heme-binding protein 1 (190 aa).

This sequence belongs to the HEBP family. Monomer.

The protein resides in the cytoplasm. Functionally, may bind free porphyrinogens that may be present in the cell and thus facilitate removal of these potentially toxic compound. Binds with a high affinity to one molecule of heme or porphyrins. It binds metalloporphyrins, free porphyrins and N-methylprotoporphyrin with similar affinities. The sequence is that of Heme-binding protein 1 (hebp1) from Xenopus tropicalis (Western clawed frog).